A 235-amino-acid chain; its full sequence is Pathogen-related protein (235 aa).

The sequence is that of Pathogen-related protein from Hordeum vulgare (Barley).